A 261-amino-acid polypeptide reads, in one-letter code: Lipase LipV (261 aa).

The active-site Nucleophile is the serine 87. Active-site charge relay system residues include aspartate 217 and histidine 240.

It belongs to the AB hydrolase superfamily.

The catalysed reaction is a carboxylic ester + H2O = an alcohol + a carboxylate + H(+). It catalyses the reaction a tetradecanoate ester + H2O = an aliphatic alcohol + tetradecanoate + H(+). The enzyme catalyses decanoate ester + H2O = decanoate + an aliphatic alcohol + H(+). It carries out the reaction an octanoate ester + H2O = an aliphatic alcohol + octanoate + H(+). The catalysed reaction is a dodecanoate ester + H2O = an aliphatic alcohol + dodecanoate + H(+). It catalyses the reaction a butanoate ester + H2O = an aliphatic alcohol + butanoate + H(+). The enzyme catalyses hexadecanoate ester + H2O = an aliphatic alcohol + hexadecanoate + H(+). It carries out the reaction octadecanoate ester + H2O = an aliphatic alcohol + octadecanoate + H(+). With respect to regulation, is inhibited by tetrahydrolipstatin, a specific lipase inhibitor and RHC 80267, a diacylglycerol lipase inhibitor, but not by phenylglyoxal and iodoacetate. In terms of biological role, lipase that displays broad substrate specificity and preferentially hydrolyzes p-nitrophenyl myristate in vitro. Also shows significant activity with pNP-butyrate (68%), pNP-octanoate (82%), pNP-decanoate (90%), and pNP-laurate (74%). Is probably involved in lipid catabolism. Is active at low pH, and might play some important role in mycobacterial biology in macrophages where the bacteria encounters acidic stress. This Mycobacterium tuberculosis (strain ATCC 25618 / H37Rv) protein is Lipase LipV.